The following is a 139-amino-acid chain: Pre-hexon-linking protein VIII (139 aa).

A propeptide spanning residues 35–69 (GAAGDYFKSPTSARTLIPLTASCLRPDGVFQLGGG) is cleaved from the precursor.

It belongs to the adenoviridae hexon-linking protein family. Interacts with the peripentonal hexons as well as the hexons in the facets. Part of a complex composed of the core-capsid bridging protein, the endosome lysis protein VI and the hexon-linking protein VIII; these interactions bridge the virus core to the capsid. In terms of processing, cleaved by the viral protease during virion maturation. May cause the middle segment to be shed from the capsid.

It is found in the host nucleus. Its subcellular location is the virion. Functionally, structural component of the virion that acts as a cement protein on the capsid interior and which glue the peripentonal hexons and group-of-nine hexons together. The sequence is that of Pre-hexon-linking protein VIII from Bovine adenovirus B serotype 3 (BAdV-3).